We begin with the raw amino-acid sequence, 309 residues long: Phosphoserine phosphatase (309 aa).

Catalysis depends on Asp97, which acts as the Nucleophile. Positions 97 and 99 each coordinate Mg(2+). Asp99 serves as the catalytic Proton donor. Residues Glu106, Arg142, 186–187 (SG), and Lys232 each bind substrate. Position 255 (Asp255) interacts with Mg(2+). A substrate-binding site is contributed by Asn258.

It belongs to the HAD-like hydrolase superfamily. SerB family. Requires Mg(2+) as cofactor.

It carries out the reaction O-phospho-L-serine + H2O = L-serine + phosphate. The catalysed reaction is O-phospho-D-serine + H2O = D-serine + phosphate. Its pathway is amino-acid biosynthesis; L-serine biosynthesis; L-serine from 3-phospho-D-glycerate: step 3/3. The polypeptide is Phosphoserine phosphatase (SER2) (Saccharomyces cerevisiae (strain ATCC 204508 / S288c) (Baker's yeast)).